The primary structure comprises 280 residues: Beta carbonic anhydrase 4 (280 aa).

Alanine 2 carries the post-translational modification N-acetylalanine. A coiled-coil region spans residues asparagine 47–threonine 76. Threonine 57 bears the Phosphothreonine mark. Serine 117 carries the phosphoserine modification. Cysteine 223 carries the post-translational modification S-nitrosocysteine.

It belongs to the beta-class carbonic anhydrase family. As to quaternary structure, interacts with DTX56. Strongly expressed in aerial tissues including leaves, stems, flowers and siliques. Accumulates in both guard cells and mesophyll cells.

Its subcellular location is the cell membrane. It carries out the reaction hydrogencarbonate + H(+) = CO2 + H2O. Reversible hydration of carbon dioxide. Together with BCA1, involved in the CO(2) signaling pathway which controls gas-exchange between plants and the atmosphere by modulating stomatal development and movements. Promotes water use efficiency. In Arabidopsis thaliana (Mouse-ear cress), this protein is Beta carbonic anhydrase 4.